Reading from the N-terminus, the 351-residue chain is AA9 family lytic polysaccharide monooxygenase A (351 aa).

His1 provides a ligand contact to Cu(2+). A disulfide bridge connects residues Cys52 and Cys178. Asn53 carries N-linked (GlcNAc...) asparagine glycosylation. Cu(2+) is bound at residue His86. Asn138 is a glycosylation site (N-linked (GlcNAc...) asparagine). Residues His164 and Gln173 each coordinate O2. Tyr175 provides a ligand contact to Cu(2+). Residue Ser280 is the site of GPI-anchor amidated serine attachment. The propeptide at 281–351 (SAIGTSTASS…RSGTLGRLSF (71 aa)) is removed in mature form.

This sequence belongs to the polysaccharide monooxygenase AA9 family. It depends on Cu(2+) as a cofactor.

Its subcellular location is the cell membrane. The catalysed reaction is [(1-&gt;4)-beta-D-glucosyl]n+m + reduced acceptor + O2 = 4-dehydro-beta-D-glucosyl-[(1-&gt;4)-beta-D-glucosyl]n-1 + [(1-&gt;4)-beta-D-glucosyl]m + acceptor + H2O.. Functionally, lytic polysaccharide monooxygenase (LPMO) that depolymerizes crystalline and amorphous polysaccharides via the oxidation of scissile alpha- or beta-(1-4)-glycosidic bonds, yielding C1 or C4 oxidation products. Catalysis by LPMOs requires the reduction of the active-site copper from Cu(II) to Cu(I) by a reducing agent and H(2)O(2) or O(2) as a cosubstrate. Has broad specificity, cleaving at any position along the beta-glucan backbone of xyloglucan, regardless of substitutions. Shows minor activity on glucomannan. This Gloeophyllum trabeum (Brown rot fungus) protein is AA9 family lytic polysaccharide monooxygenase A.